Reading from the N-terminus, the 399-residue chain is uncharacterized protein (399 aa).

8 WD repeats span residues 59–99, 102–141, 144–185, 187–227, 241–280, 283–322, 324–363, and 366–399; these read EHKD…QICQ, GHKD…EFIT, ETVD…QVMY, HTAP…PECR, ETAA…ILAS, AQTE…FRKS, PHEQ…LLGE, and GHQE…DCEH.

Its subcellular location is the cytoplasm. It localises to the nucleus. This is an uncharacterized protein from Schizosaccharomyces pombe (strain 972 / ATCC 24843) (Fission yeast).